The sequence spans 159 residues: Small ribosomal subunit protein uS17y (159 aa).

Belongs to the universal ribosomal protein uS17 family.

It localises to the cytoplasm. In Arabidopsis thaliana (Mouse-ear cress), this protein is Small ribosomal subunit protein uS17y (RPS11B).